Here is a 99-residue protein sequence, read N- to C-terminus: Osteocalcin (99 aa).

Residues 1-23 (MRTLSLLTLLALTAFCLSDLAGA) form the signal peptide. A propeptide spanning residues 24–49 (KPSDSESDKAFMSKQEGSKVVNRLRR) is cleaved from the precursor. Residues 50-96 (YLNNGLGAPAPYPDPLEPHREVCELNPNCDELADHIGFQDAYKRIYG) enclose the Gla domain. Pro58 is subject to Hydroxyproline. Ca(2+) is bound by residues Glu66, Glu70, Glu73, and Asp79. A 4-carboxyglutamate mark is found at Glu66, Glu70, and Glu73. Cys72 and Cys78 are disulfide-bonded.

This sequence belongs to the osteocalcin/matrix Gla protein family. Gamma-carboxyglutamate residues are formed by vitamin K dependent carboxylation by GGCX. These residues are essential for the binding of calcium. Decarboxylation promotes the hormone activity.

It localises to the secreted. The carboxylated form is one of the main organic components of the bone matrix, which constitutes 1-2% of the total bone protein: it acts as a negative regulator of bone formation and is required to limit bone formation without impairing bone resorption or mineralization. The carboxylated form binds strongly to apatite and calcium. In terms of biological role, the uncarboxylated form acts as a hormone secreted by osteoblasts, which regulates different cellular processes, such as energy metabolism, male fertility and brain development. Regulates of energy metabolism by acting as a hormone favoring pancreatic beta-cell proliferation, insulin secretion and sensitivity and energy expenditure. Uncarboxylated osteocalcin hormone also promotes testosterone production in the testes: acts as a ligand for G protein-coupled receptor GPRC6A at the surface of Leydig cells, initiating a signaling response that promotes the expression of enzymes required for testosterone synthesis in a CREB-dependent manner. Also acts as a regulator of brain development: osteocalcin hormone crosses the blood-brain barrier and acts as a ligand for GPR158 on neurons, initiating a signaling response that prevents neuronal apoptosis in the hippocampus, favors the synthesis of all monoamine neurotransmitters and inhibits that of gamma-aminobutyric acid (GABA). Osteocalcin also crosses the placenta during pregnancy and maternal osteocalcin is required for fetal brain development. The protein is Osteocalcin (Bglap) of Rattus norvegicus (Rat).